We begin with the raw amino-acid sequence, 523 residues long: Cytochrome P450 52-N1 (523 aa).

Residues 5–25 (AVLGAFAAFLLYMDVLYPFVI) form a helical membrane-spanning segment. Cysteine 469 contacts heme.

Belongs to the cytochrome P450 family. The cofactor is heme.

Its subcellular location is the membrane. It carries out the reaction an omega-methyl-long-chain fatty acid + reduced [NADPH--hemoprotein reductase] + O2 = an omega-hydroxy-long-chain fatty acid + oxidized [NADPH--hemoprotein reductase] + H2O + H(+). The enzyme catalyses (9Z,12Z)-octadecadienoate + reduced [NADPH--hemoprotein reductase] + O2 = 18-hydroxy-(9Z,12Z)-octadecadienoate + oxidized [NADPH--hemoprotein reductase] + H2O + H(+). The catalysed reaction is (9Z)-octadecenoate + reduced [NADPH--hemoprotein reductase] + O2 = 18-hydroxy-(9Z)-octadecenoate + oxidized [NADPH--hemoprotein reductase] + H2O + H(+). It catalyses the reaction hexadecanoate + reduced [NADPH--hemoprotein reductase] + O2 = 16-hydroxyhexadecanoate + oxidized [NADPH--hemoprotein reductase] + H2O + H(+). It carries out the reaction (9Z)-hexadecenoate + reduced [NADPH--hemoprotein reductase] + O2 = (9Z)-16-hydroxyhexadec-9-enoate + oxidized [NADPH--hemoprotein reductase] + H2O + H(+). The enzyme catalyses octadecanoate + reduced [NADPH--hemoprotein reductase] + O2 = 18-hydroxyoctadecanoate + oxidized [NADPH--hemoprotein reductase] + H2O + H(+). Functionally, catalyzes the terminal (at the omega-position) hydroxylation of a fatty acid. Probably involved in alkane metabolism. Linoleic acid is the preferred substrate, but it acts on various other C-16, C-18 and C-20 saturated and unsaturated fatty acids, namely palmitic, palmitoleic, stearic, oleic, alpha-linoleic, arachidonic and myristic acid. The protein is Cytochrome P450 52-N1 of Starmerella bombicola (Yeast).